A 334-amino-acid chain; its full sequence is tRNA uridine(34) hydroxylase (334 aa).

The 95-residue stretch at 123–217 (SDPDVILVDT…YLEEVKAEES (95 aa)) folds into the Rhodanese domain. The Cysteine persulfide intermediate role is filled by C177.

Belongs to the TrhO family.

It catalyses the reaction uridine(34) in tRNA + AH2 + O2 = 5-hydroxyuridine(34) in tRNA + A + H2O. Functionally, catalyzes oxygen-dependent 5-hydroxyuridine (ho5U) modification at position 34 in tRNAs. The chain is tRNA uridine(34) hydroxylase from Shewanella baltica (strain OS223).